A 290-amino-acid polypeptide reads, in one-letter code: Agmatinase (290 aa).

Histidine 112, aspartate 135, histidine 137, aspartate 139, aspartate 216, and aspartate 218 together coordinate Mn(2+).

This sequence belongs to the arginase family. Agmatinase subfamily. Mn(2+) serves as cofactor.

The catalysed reaction is agmatine + H2O = urea + putrescine. It participates in amine and polyamine biosynthesis; putrescine biosynthesis via agmatine pathway; putrescine from agmatine: step 1/1. Functionally, catalyzes the formation of putrescine from agmatine. This is Agmatinase (speB) from Bacillus cereus (strain ATCC 14579 / DSM 31 / CCUG 7414 / JCM 2152 / NBRC 15305 / NCIMB 9373 / NCTC 2599 / NRRL B-3711).